We begin with the raw amino-acid sequence, 423 residues long: tRNA(Met) cytidine acetate ligase (423 aa).

ATP-binding positions include 7–20 (VVEYNPFHNGHLYH), Gly102, Asn165, and Arg190.

It belongs to the TmcAL family.

The protein resides in the cytoplasm. The enzyme catalyses cytidine(34) in elongator tRNA(Met) + acetate + ATP = N(4)-acetylcytidine(34) in elongator tRNA(Met) + AMP + diphosphate. Catalyzes the formation of N(4)-acetylcytidine (ac(4)C) at the wobble position of elongator tRNA(Met), using acetate and ATP as substrates. First activates an acetate ion to form acetyladenylate (Ac-AMP) and then transfers the acetyl group to tRNA to form ac(4)C34. The chain is tRNA(Met) cytidine acetate ligase from Thermosipho africanus (strain TCF52B).